We begin with the raw amino-acid sequence, 301 residues long: NADH-cytochrome b5 reductase 3 (301 aa).

Gly-2 is lipidated: N-myristoyl glycine. One can recognise an FAD-binding FR-type domain in the interval 40–152; it reads DIKYPLRLID…RGPNGLLVYQ (113 aa). Lys-42 bears the N6-acetyllysine mark. Tyr-43 carries the phosphotyrosine modification. Lys-50 carries the N6-acetyllysine modification. The FAD site is built by Arg-92, Pro-93, Tyr-94, Val-109, Lys-111, and Phe-114. Lys-120 carries the N6-acetyllysine modification. FAD-binding residues include Lys-126, Met-127, Ser-128, and Thr-185.

It belongs to the flavoprotein pyridine nucleotide cytochrome reductase family. As to quaternary structure, component of a complex composed of cytochrome b5, NADH-cytochrome b5 reductase (CYB5R3) and MTARC2. Interacts with MTLN; the interaction is required to maintain cellular lipid composition and leads to stimulation of mitochondrial respiratory complex I activity. FAD is required as a cofactor. Post-translationally, myristoylated. In terms of tissue distribution, ubiquitously expressed. As to expression, expressed only in erythroid tissues, reticulocytes and liver.

It localises to the endoplasmic reticulum membrane. The protein resides in the mitochondrion outer membrane. Its subcellular location is the cytoplasm. It carries out the reaction 2 Fe(III)-[cytochrome b5] + NADH = 2 Fe(II)-[cytochrome b5] + NAD(+) + H(+). Its function is as follows. Catalyzes the reduction of two molecules of cytochrome b5 using NADH as the electron donor. The polypeptide is NADH-cytochrome b5 reductase 3 (Rattus norvegicus (Rat)).